We begin with the raw amino-acid sequence, 327 residues long: Annexin A8 (327 aa).

4 Annexin repeats span residues 21-92 (FNPV…ALMY), 93-164 (PPYR…CLLQ), 177-249 (GLAL…TIVK), and 253-324 (NLHC…SLVG). Residues methionine 266, glycine 268, glycine 270, and aspartate 310 each coordinate Ca(2+).

It belongs to the annexin family.

This protein is an anticoagulant protein that acts as an indirect inhibitor of the thromboplastin-specific complex, which is involved in the blood coagulation cascade. In Oryctolagus cuniculus (Rabbit), this protein is Annexin A8 (ANXA8).